The sequence spans 63 residues: SPbeta prophage-derived uncharacterized protein YomP (63 aa).

The sequence is that of SPbeta prophage-derived uncharacterized protein YomP (yomP) from Bacillus subtilis (strain 168).